The sequence spans 325 residues: Tetraacyldisaccharide 4'-kinase (325 aa).

An ATP-binding site is contributed by 58–65; the sequence is TVGGSGKT.

It belongs to the LpxK family.

The catalysed reaction is a lipid A disaccharide + ATP = a lipid IVA + ADP + H(+). It participates in glycolipid biosynthesis; lipid IV(A) biosynthesis; lipid IV(A) from (3R)-3-hydroxytetradecanoyl-[acyl-carrier-protein] and UDP-N-acetyl-alpha-D-glucosamine: step 6/6. Functionally, transfers the gamma-phosphate of ATP to the 4'-position of a tetraacyldisaccharide 1-phosphate intermediate (termed DS-1-P) to form tetraacyldisaccharide 1,4'-bis-phosphate (lipid IVA). This chain is Tetraacyldisaccharide 4'-kinase, found in Coxiella burnetii (strain CbuG_Q212) (Coxiella burnetii (strain Q212)).